The chain runs to 193 residues: Rho-related GTP-binding protein RhoA-B (193 aa).

GTP is bound by residues 12–19, 30–37, 59–63, 117–120, and 160–162; these read GDGACGKT, FPEVYVPT, DTAGQ, NKKD, and SAK. A glycan ((Microbial infection) O-linked (GlcNAc) tyrosine; by Yersinia Afp18) is linked at Tyr-34. Cys-190 is modified (cysteine methyl ester). Cys-190 carries S-geranylgeranyl cysteine lipidation. The propeptide at 191-193 is removed in mature form; sequence CLL.

Belongs to the small GTPase superfamily. Rho family. In terms of processing, (Microbial infection) Glycosylated at Tyr-34 by Yersinia ruckeri toxin Afp18. Mono-O-GlcNAcylation by Afp18 inhibits RhoA activation by guanine nucleotide exchange factors and blocks RhoA signaling.

Its subcellular location is the cell membrane. In terms of biological role, regulates a signal transduction pathway linking plasma membrane receptors to the assembly of focal adhesions and actin stress fibers. In Danio rerio (Zebrafish), this protein is Rho-related GTP-binding protein RhoA-B.